The following is a 370-amino-acid chain: 2-aminoethylphosphonate--pyruvate transaminase 2 (370 aa).

At K194 the chain carries N6-(pyridoxal phosphate)lysine.

The protein belongs to the class-V pyridoxal-phosphate-dependent aminotransferase family. PhnW subfamily. In terms of assembly, homodimer. The cofactor is pyridoxal 5'-phosphate.

The catalysed reaction is (2-aminoethyl)phosphonate + pyruvate = phosphonoacetaldehyde + L-alanine. Its function is as follows. Involved in phosphonate degradation. This is 2-aminoethylphosphonate--pyruvate transaminase 2 from Paraburkholderia xenovorans (strain LB400).